The sequence spans 375 residues: Anhydro-N-acetylmuramic acid kinase (375 aa).

18–25 contacts ATP; the sequence is GTSMDGID.

Belongs to the anhydro-N-acetylmuramic acid kinase family.

It catalyses the reaction 1,6-anhydro-N-acetyl-beta-muramate + ATP + H2O = N-acetyl-D-muramate 6-phosphate + ADP + H(+). It participates in amino-sugar metabolism; 1,6-anhydro-N-acetylmuramate degradation. Its pathway is cell wall biogenesis; peptidoglycan recycling. Catalyzes the specific phosphorylation of 1,6-anhydro-N-acetylmuramic acid (anhMurNAc) with the simultaneous cleavage of the 1,6-anhydro ring, generating MurNAc-6-P. Is required for the utilization of anhMurNAc either imported from the medium or derived from its own cell wall murein, and thus plays a role in cell wall recycling. The polypeptide is Anhydro-N-acetylmuramic acid kinase (Rhodospirillum rubrum (strain ATCC 11170 / ATH 1.1.1 / DSM 467 / LMG 4362 / NCIMB 8255 / S1)).